The following is a 396-amino-acid chain: Elongation factor Tu 2 (396 aa).

The 197-residue stretch at 10–206 (KPHVNVGTIG…ALDSYIPLPE (197 aa)) folds into the tr-type G domain. Residues 19-26 (GHVDHGKT) form a G1 region. Residue 19 to 26 (GHVDHGKT) participates in GTP binding. Threonine 26 provides a ligand contact to Mg(2+). The G2 stretch occupies residues 60-64 (GITIN). A G3 region spans residues 81–84 (DCPG). GTP is bound by residues 81–85 (DCPGH) and 136–139 (NKCD). The interval 136–139 (NKCD) is G4. A G5 region spans residues 174-176 (SAK).

This sequence belongs to the TRAFAC class translation factor GTPase superfamily. Classic translation factor GTPase family. EF-Tu/EF-1A subfamily. As to quaternary structure, monomer.

It is found in the cytoplasm. The enzyme catalyses GTP + H2O = GDP + phosphate + H(+). Its function is as follows. GTP hydrolase that promotes the GTP-dependent binding of aminoacyl-tRNA to the A-site of ribosomes during protein biosynthesis. The chain is Elongation factor Tu 2 from Albidiferax ferrireducens (strain ATCC BAA-621 / DSM 15236 / T118) (Rhodoferax ferrireducens).